Reading from the N-terminus, the 460-residue chain is NADH-ubiquinone oxidoreductase chain 4 (460 aa).

13 helical membrane passes run Trp22–Leu42, Pro61–Ser81, Arg94–Ala113, Ile117–Asn139, Thr148–Leu168, Ile195–Leu217, Pro225–Met245, Met258–Leu278, Ser285–Ile304, Trp308–Leu330, Ile351–Pro371, Leu394–Met414, and Leu436–Trp456.

The protein belongs to the complex I subunit 4 family.

It localises to the mitochondrion membrane. The catalysed reaction is a ubiquinone + NADH + 5 H(+)(in) = a ubiquinol + NAD(+) + 4 H(+)(out). Functionally, core subunit of the mitochondrial membrane respiratory chain NADH dehydrogenase (Complex I) that is believed to belong to the minimal assembly required for catalysis. Complex I functions in the transfer of electrons from NADH to the respiratory chain. The immediate electron acceptor for the enzyme is believed to be ubiquinone. This chain is NADH-ubiquinone oxidoreductase chain 4 (MT-ND4), found in Gadus morhua (Atlantic cod).